Reading from the N-terminus, the 280-residue chain is Dopamine receptor-interacting protein 1 (280 aa).

Interacts with DRD1, the dopamine D1 receptor.

In terms of biological role, could be a regulator of the dopamine receptor signaling pathway. The chain is Dopamine receptor-interacting protein 1 (DORIP1) from Bos taurus (Bovine).